The primary structure comprises 199 residues: Probable GTP-binding protein EngB (199 aa).

Residues 28–199 (DLPEIALAGR…DSWDAILEQV (172 aa)) form the EngB-type G domain. Residues 36 to 43 (GRSNVGKS), 63 to 67 (GKTQL), 81 to 84 (DVPG), 148 to 151 (TKAD), and 180 to 182 (FSS) contribute to the GTP site. Mg(2+)-binding residues include serine 43 and threonine 65.

Belongs to the TRAFAC class TrmE-Era-EngA-EngB-Septin-like GTPase superfamily. EngB GTPase family. Requires Mg(2+) as cofactor.

Its function is as follows. Necessary for normal cell division and for the maintenance of normal septation. The protein is Probable GTP-binding protein EngB of Streptococcus pyogenes serotype M1.